Consider the following 47-residue polypeptide: Gene 60 protein (47 aa).

The sequence is that of Gene 60 protein (60) from Mycobacterium phage L5 (Mycobacteriophage L5).